We begin with the raw amino-acid sequence, 559 residues long: Frizzled-5 (559 aa).

Residues 1 to 26 form the signal peptide; the sequence is MGSFRSGVFALSFVVLLLDYFAPAQA. Residues 27–220 lie on the Extracellular side of the membrane; that stretch reads ASKAIVCQEI…QPYFTQDEKM (194 aa). Residues 28 to 149 enclose the FZ domain; the sequence is SKAIVCQEIT…GDPDTLCMYY (122 aa). 5 cysteine pairs are disulfide-bonded: Cys-33/Cys-94, Cys-41/Cys-87, Cys-78/Cys-116, Cys-105/Cys-146, and Cys-109/Cys-133. The N-linked (GlcNAc...) asparagine glycan is linked to Asn-47. Residue Asn-150 is glycosylated (N-linked (GlcNAc...) asparagine). The helical transmembrane segment at 221 to 241 threads the bilayer; that stretch reads FVTFWIGLWSILCFISTFTTV. Topologically, residues 242–257 are cytoplasmic; it reads ATFLIDMERFRYPERP. Residues 258–278 traverse the membrane as a helical segment; the sequence is IIFLSACYLFVSIGYVVRLIV. Topologically, residues 279–301 are extracellular; it reads GHENVACNKDHIHYETTGPALCT. A helical membrane pass occupies residues 302–322; that stretch reads IVFLLIYFFGMASSIWWVILT. At 323–343 the chain is on the cytoplasmic side; it reads FTWFLAAGMKWGNEAIASYSQ. The helical transmembrane segment at 344 to 364 threads the bilayer; that stretch reads YFHMAAWLIPSVKSIAVLALS. The Extracellular segment spans residues 365-387; that stretch reads SVDGDPVAGICYVGNQNLDNLRG. A helical membrane pass occupies residues 388–408; it reads FVLAPLVVYLFSGTMFLLAGF. The Cytoplasmic segment spans residues 409–434; sequence VSLFRIRSVIKQGGTKTDKLEKLMIR. The helical transmembrane segment at 435–455 threads the bilayer; sequence IGIFSVLYTVPATIVVACYIY. Topologically, residues 456 to 483 are extracellular; the sequence is EQHYREHWEKTHNCSCPGDKQRYRPDYA. Residue Asn-468 is glycosylated (N-linked (GlcNAc...) asparagine). Residues 484-504 form a helical membrane-spanning segment; sequence VFMLKYLMCLVVGITSGVWIW. The Cytoplasmic segment spans residues 505–559; sequence SGKTLESWKRFTGRCCRNSKPINASAYSEASRALTPRTGLSNLTLPHKQVPLSHV. The Lys-Thr-X-X-X-Trp motif, mediates interaction with the PDZ domain of Dvl family members motif lies at 507-512; sequence KTLESW. Positions 557–559 match the PDZ-binding motif; it reads SHV.

It belongs to the G-protein coupled receptor Fz/Smo family. In terms of tissue distribution, expressed in retina.

The protein localises to the cell membrane. It localises to the golgi apparatus membrane. Its function is as follows. Receptor for Wnt proteins that functions in the canonical Wnt/beta-catenin signaling pathway. The canonical Wnt/beta-catenin signaling pathway leads to the activation of disheveled proteins, inhibition of GSK-3 kinase, nuclear accumulation of beta-catenin and activation of Wnt target genes. A second signaling pathway involving PKC and calcium fluxes has been seen for some family members, but it is not yet clear if it represents a distinct pathway or if it can be integrated in the canonical pathway, as PKC seems to be required for Wnt-mediated inactivation of GSK-3 kinase. Both pathways seem to involve interactions with G-proteins. May be involved in transduction and intercellular transmission of polarity information during tissue morphogenesis and/or in differentiated tissues. This Xenopus laevis (African clawed frog) protein is Frizzled-5 (fzd5).